The following is a 373-amino-acid chain: tRNA-specific 2-thiouridylase MnmA (373 aa).

ATP contacts are provided by residues 12–19 (GMSGGVDS) and methionine 38. An interaction with target base in tRNA region spans residues 98–100 (NPD). Catalysis depends on cysteine 103, which acts as the Nucleophile. A disulfide bridge links cysteine 103 with cysteine 200. Residue glycine 127 coordinates ATP. Residues 150-152 (KDQ) form an interaction with tRNA region. Residue cysteine 200 is the Cysteine persulfide intermediate of the active site. Residues 312 to 313 (RY) form an interaction with tRNA region.

This sequence belongs to the MnmA/TRMU family.

It is found in the cytoplasm. The catalysed reaction is S-sulfanyl-L-cysteinyl-[protein] + uridine(34) in tRNA + AH2 + ATP = 2-thiouridine(34) in tRNA + L-cysteinyl-[protein] + A + AMP + diphosphate + H(+). Functionally, catalyzes the 2-thiolation of uridine at the wobble position (U34) of tRNA, leading to the formation of s(2)U34. This chain is tRNA-specific 2-thiouridylase MnmA, found in Streptococcus pyogenes serotype M28 (strain MGAS6180).